We begin with the raw amino-acid sequence, 510 residues long: Bifunctional purine biosynthesis protein PurH (510 aa).

One can recognise an MGS-like domain in the interval 1–142 (MRALLSVSDK…KNYKDVMVLC (142 aa)).

It belongs to the PurH family.

The catalysed reaction is (6R)-10-formyltetrahydrofolate + 5-amino-1-(5-phospho-beta-D-ribosyl)imidazole-4-carboxamide = 5-formamido-1-(5-phospho-D-ribosyl)imidazole-4-carboxamide + (6S)-5,6,7,8-tetrahydrofolate. It catalyses the reaction IMP + H2O = 5-formamido-1-(5-phospho-D-ribosyl)imidazole-4-carboxamide. It participates in purine metabolism; IMP biosynthesis via de novo pathway; 5-formamido-1-(5-phospho-D-ribosyl)imidazole-4-carboxamide from 5-amino-1-(5-phospho-D-ribosyl)imidazole-4-carboxamide (10-formyl THF route): step 1/1. Its pathway is purine metabolism; IMP biosynthesis via de novo pathway; IMP from 5-formamido-1-(5-phospho-D-ribosyl)imidazole-4-carboxamide: step 1/1. The chain is Bifunctional purine biosynthesis protein PurH from Campylobacter jejuni (strain RM1221).